Reading from the N-terminus, the 713-residue chain is Topoisomerase subunit TopoM (713 aa).

A Topo IIA-type catalytic domain is found at Ile-41–Glu-504. The active-site O-(5'-phospho-DNA)-tyrosine intermediate is Tyr-128. Positions Asn-694 to Glu-713 are disordered.

Belongs to the type II topoisomerase GyrA/ParC subunit family. As to quaternary structure, a complex of TopoN and TopoM, possibly a heterotetramer. Mg(2+) is required as a cofactor.

The catalysed reaction is ATP-dependent breakage, passage and rejoining of double-stranded DNA.. With respect to regulation, inhibited by quinolone antibiotic ciprofloxacin and coumarin antibiotic novobiocin, but at much higher concentrations than is usual for DNA gyrase/topoisomerase. In terms of biological role, catalyzes the relaxation of negatively supercoiled DNA in the presence of ATP or dATP but not other nucleotides. Individual subunits have no activity. Not able to negatively supercoil DNA, it can however introduce positive supercoils in DNA. Relaxes positive supercoils in an ATP-dependent manner. Catenates and decatenates DNA. Generates dsDNA breaks in the presence of the quinolone antibiotic ciprofloxacin, showing it is a topoisomerase. The polypeptide is Topoisomerase subunit TopoM (Mycolicibacterium smegmatis (strain ATCC 700084 / mc(2)155) (Mycobacterium smegmatis)).